We begin with the raw amino-acid sequence, 396 residues long: Elongation factor Tu (396 aa).

One can recognise a tr-type G domain in the interval 10 to 206; the sequence is KPHVNVGTIG…ALDSYIPTPE (197 aa). Positions 19-26 are G1; it reads GHVDHGKT. 19–26 lines the GTP pocket; that stretch reads GHVDHGKT. Residue Thr-26 participates in Mg(2+) binding. A G2 region spans residues 60–64; that stretch reads GITIN. Residues 81-84 form a G3 region; it reads DCPG. GTP contacts are provided by residues 81–85 and 136–139; these read DCPGH and NKCD. The tract at residues 136–139 is G4; sequence NKCD. Positions 174–176 are G5; that stretch reads SAL.

This sequence belongs to the TRAFAC class translation factor GTPase superfamily. Classic translation factor GTPase family. EF-Tu/EF-1A subfamily. Monomer.

The protein resides in the cytoplasm. The enzyme catalyses GTP + H2O = GDP + phosphate + H(+). Its function is as follows. GTP hydrolase that promotes the GTP-dependent binding of aminoacyl-tRNA to the A-site of ribosomes during protein biosynthesis. In Azoarcus sp. (strain BH72), this protein is Elongation factor Tu.